We begin with the raw amino-acid sequence, 208 residues long: Thymidylate kinase (208 aa).

10–17 lines the ATP pocket; sequence GIDGCGKT.

This sequence belongs to the thymidylate kinase family.

It carries out the reaction dTMP + ATP = dTDP + ADP. Its function is as follows. Phosphorylation of dTMP to form dTDP in both de novo and salvage pathways of dTTP synthesis. In Caldanaerobacter subterraneus subsp. tengcongensis (strain DSM 15242 / JCM 11007 / NBRC 100824 / MB4) (Thermoanaerobacter tengcongensis), this protein is Thymidylate kinase.